The sequence spans 295 residues: Defective in cullin neddylation protein 1 (295 aa).

One can recognise a UBA-like domain in the interval 8-45 (QKTKLRQFVQWTQVTEAVSLNFLAKANWNIEYAMTLYF). Residues 60–272 (VDRSNIERLF…LIDQFVDYCR (213 aa)) enclose the DCUN1 domain.

As to quaternary structure, interacts with the cullin cul-3. Interacts with ubiquitin via its UBA-like domain. Interacts with ned-8/nedd8.

It localises to the nucleus. Its function is as follows. Required for neddylation of cullin components of SCF-type E3 ubiquitin ligase complexes. Neddylation of cullins play an essential role in the regulation of SCF-type complexes activity. Does not act by preventing deneddylation, but rather facilitates neddylation, possibly by acting with rbx-1 to recruit the Nedd8-charged E2 enzyme to the cullin component of SCF-type complexes. This is Defective in cullin neddylation protein 1 (dcn-1) from Caenorhabditis elegans.